A 466-amino-acid chain; its full sequence is Asparagine--tRNA ligase (466 aa).

The protein belongs to the class-II aminoacyl-tRNA synthetase family. In terms of assembly, homodimer.

The protein localises to the cytoplasm. The enzyme catalyses tRNA(Asn) + L-asparagine + ATP = L-asparaginyl-tRNA(Asn) + AMP + diphosphate + H(+). This is Asparagine--tRNA ligase from Shewanella sp. (strain MR-7).